We begin with the raw amino-acid sequence, 613 residues long: Zinc finger protein 665 (613 aa).

C2H2-type zinc fingers lie at residues 113–135 (YKCDECGKVFNQNSRLTSHKRIH), 141–163 (YRCNECGKAFTVRSNLTIHQVIH), 169–191 (YKCNECGKVFSQPSNLAGHQRIH), 197–219 (YKCNECGKAFRAHSKLTTHQVIH), 225–247 (YKCNECGKCFTQNSHLASHRRIH), 253–275 (YKCNECGKAFSVRSSLTTHQTIH), 281–303 (YKCNECGKVFRHNSYLTKHRRVH), 309–331 (YKCNECGKAFSMHSNLTKHQIIH), 337–359 (FKCNECVKVFTQYSHLANHRRIH), 365–387 (YRCDECGKAFSVRSSLTTHQAIH), 393–415 (YKCNDCGKVFTQNSHLASHRGIH), 421–443 (YKCDECGKAFSQTSQLARHWRVH), 449–471 (YKCNECGKAFSVHSSLTTHQTIH), 477–499 (YKCNDCGKVFRHNSYLAVHQRIH), 505–527 (YKCNECGKAFSVHSNLATHQVIH), 533–555 (YKCNECGKVFTQNSHLANHRRIH), 561–583 (YRCNECGKAFSVRSTLTTHMAIH), and 589–611 (YKCNECGKVFTQNSNLAKHRRIH).

It belongs to the krueppel C2H2-type zinc-finger protein family.

It localises to the nucleus. In terms of biological role, may be involved in transcriptional regulation. This chain is Zinc finger protein 665 (ZNF665), found in Pongo abelii (Sumatran orangutan).